The following is a 120-amino-acid chain: Large ribosomal subunit protein bL19 (120 aa).

Belongs to the bacterial ribosomal protein bL19 family.

Its function is as follows. This protein is located at the 30S-50S ribosomal subunit interface and may play a role in the structure and function of the aminoacyl-tRNA binding site. This Chlorobium chlorochromatii (strain CaD3) protein is Large ribosomal subunit protein bL19.